The chain runs to 453 residues: Serine/threonine-protein phosphatase 2A regulatory subunit B'' subunit gamma (453 aa).

2 consecutive EF-hand domains span residues 273 to 308 (PSALRVYGQYLNLDKDHNGMLSKEELSRYGTATMTN) and 341 to 376 (KEPAALQYIFKLLDIENKGYLNVFSLNYFFRAIQEL). Ca(2+) is bound by residues D286, D288, N290, M292, and E297.

Interacts with MCM3AP/GANP. Interacts with PPP5C, and the phosphatase 2A core enzyme composed of the PPP2CA catalytic subunit and the constant regulatory subunit PPP2R1A. Finds in a complex with ABCB1, TFPI2 and PPP2R3C; leading to the dephosphorylation of ABCB1. As to expression, ubiquitously expressed in brain and other tissues.

It is found in the nucleus. The protein resides in the cytoplasm. May regulate MCM3AP phosphorylation through phosphatase recruitment. May act as a negative regulator of ABCB1 expression and function through the dephosphorylation of ABCB1 by TFPI2/PPP2R3C complex. May play a role in the activation-induced cell death of B-cells. This is Serine/threonine-protein phosphatase 2A regulatory subunit B'' subunit gamma (PPP2R3C) from Homo sapiens (Human).